Reading from the N-terminus, the 272-residue chain is Proteasome subunit beta (272 aa).

The propeptide at 1-47 is removed in mature form; by autocatalysis; that stretch reads MSTGGDRLPEAFLRPGSSSFVEFLREVAPQSHPEHARPAGAGDVVHA. Catalysis depends on Thr-48, which acts as the Nucleophile.

It belongs to the peptidase T1B family. As to quaternary structure, the 20S proteasome core is composed of 14 alpha and 14 beta subunits that assemble into four stacked heptameric rings, resulting in a barrel-shaped structure. The two inner rings, each composed of seven catalytic beta subunits, are sandwiched by two outer rings, each composed of seven alpha subunits. The catalytic chamber with the active sites is on the inside of the barrel. Has a gated structure, the ends of the cylinder being occluded by the N-termini of the alpha-subunits. Is capped by the proteasome-associated ATPase, ARC.

It is found in the cytoplasm. It carries out the reaction Cleavage of peptide bonds with very broad specificity.. Its pathway is protein degradation; proteasomal Pup-dependent pathway. With respect to regulation, the formation of the proteasomal ATPase ARC-20S proteasome complex, likely via the docking of the C-termini of ARC into the intersubunit pockets in the alpha-rings, may trigger opening of the gate for substrate entry. Interconversion between the open-gate and close-gate conformations leads to a dynamic regulation of the 20S proteasome proteolysis activity. Component of the proteasome core, a large protease complex with broad specificity involved in protein degradation. The protein is Proteasome subunit beta of Beutenbergia cavernae (strain ATCC BAA-8 / DSM 12333 / CCUG 43141 / JCM 11478 / NBRC 16432 / NCIMB 13614 / HKI 0122).